Consider the following 243-residue polypeptide: MKKLVLAALLASFTFGASAAEKINFGVSATYPPFESIGANNEIVGFDIDLAKALCKQMQAECTFTNHAFDSLIPSLKFRKYDAVISGMDITPERSKQVSFTTPYYENSAVVIAKKDTYKTFADLKGKRIGMENGTTHQKYIQDQHPEVKTVSYDSYQNAFIDLKNGRIDGVFGDTAVVNEWLKTNPQLGVATEKVTDPQYFGTGLGIAVRPDNKALLEKLNNALAAIKADGTYQKISDQWFPQ.

Residues 1–19 form the signal peptide; the sequence is MKKLVLAALLASFTFGASA.

It belongs to the bacterial solute-binding protein 3 family. The complex is composed of two ATP-binding proteins (ArtP), two transmembrane proteins (ArtM and ArtQ) and two solute-binding proteins (ArtJ and ArtI).

It localises to the periplasm. In terms of biological role, part of the ABC transporter complex ArtPIQMJ involved in arginine transport. Binds L-arginine with high affinity. The chain is ABC transporter arginine-binding protein 1 (artJ) from Escherichia coli (strain K12).